Reading from the N-terminus, the 144-residue chain is Ferredoxin-thioredoxin reductase catalytic chain, chloroplastic (144 aa).

A chloroplast-targeting transit peptide spans 1–31 (MKALQASIAYSFPISSPAASPRRFSRVIRAQ). Cysteine 83 contacts [4Fe-4S] cluster. Cysteine 85 (nucleophile) is an active-site residue. Cysteine 85 and cysteine 115 are oxidised to a cystine. [4Fe-4S] cluster-binding residues include cysteine 102, cysteine 104, and cysteine 113.

This sequence belongs to the ferredoxin thioredoxin reductase beta subunit family. As to quaternary structure, heterodimer of subunit A (variable subunit) and subunit B (catalytic subunit). Heterodimeric FTR forms a complex with ferredoxin and thioredoxin. It depends on [4Fe-4S] cluster as a cofactor.

The protein localises to the plastid. The protein resides in the chloroplast. The enzyme catalyses [thioredoxin]-disulfide + 2 reduced [2Fe-2S]-[ferredoxin] + 2 H(+) = [thioredoxin]-dithiol + 2 oxidized [2Fe-2S]-[ferredoxin]. Catalytic subunit of the ferredoxin-thioredoxin reductase (FTR), which catalyzes the two-electron reduction of thioredoxins by the electrons provided by reduced ferredoxin. This Spinacia oleracea (Spinach) protein is Ferredoxin-thioredoxin reductase catalytic chain, chloroplastic (FTRC).